The primary structure comprises 600 residues: UvrABC system protein C (600 aa).

In terms of domain architecture, GIY-YIG spans 15 to 92; the sequence is DKPGCYLMKD…IKKYQPYYNV (78 aa). The region spanning 197–232 is the UVR domain; sequence SQVKQDLTEKMTQASMNLEFERAAEFRDQLKYIEQT.

It belongs to the UvrC family. In terms of assembly, interacts with UvrB in an incision complex.

The protein localises to the cytoplasm. The UvrABC repair system catalyzes the recognition and processing of DNA lesions. UvrC both incises the 5' and 3' sides of the lesion. The N-terminal half is responsible for the 3' incision and the C-terminal half is responsible for the 5' incision. This chain is UvrABC system protein C, found in Lactobacillus gasseri (strain ATCC 33323 / DSM 20243 / BCRC 14619 / CIP 102991 / JCM 1131 / KCTC 3163 / NCIMB 11718 / NCTC 13722 / AM63).